Consider the following 89-residue polypeptide: Cell division topological specificity factor (89 aa).

Belongs to the MinE family.

Its function is as follows. Prevents the cell division inhibition by proteins MinC and MinD at internal division sites while permitting inhibition at polar sites. This ensures cell division at the proper site by restricting the formation of a division septum at the midpoint of the long axis of the cell. The polypeptide is Cell division topological specificity factor (Yersinia pestis bv. Antiqua (strain Angola)).